Here is a 351-residue protein sequence, read N- to C-terminus: Uroporphyrinogen decarboxylase (351 aa).

Substrate-binding positions include 26–30, Phe45, Asp76, Tyr153, Ser208, and His323; that span reads RQAGR.

The protein belongs to the uroporphyrinogen decarboxylase family. Homodimer.

The protein localises to the cytoplasm. It catalyses the reaction uroporphyrinogen III + 4 H(+) = coproporphyrinogen III + 4 CO2. It functions in the pathway porphyrin-containing compound metabolism; protoporphyrin-IX biosynthesis; coproporphyrinogen-III from 5-aminolevulinate: step 4/4. Catalyzes the decarboxylation of four acetate groups of uroporphyrinogen-III to yield coproporphyrinogen-III. The chain is Uroporphyrinogen decarboxylase from Prochlorococcus marinus (strain SARG / CCMP1375 / SS120).